The chain runs to 102 residues: Citrate lyase acyl carrier protein (102 aa).

An O-(phosphoribosyl dephospho-coenzyme A)serine modification is found at Ser14.

This sequence belongs to the CitD family. As to quaternary structure, oligomer with a subunit composition of (alpha,beta,gamma)6.

It localises to the cytoplasm. In terms of biological role, covalent carrier of the coenzyme of citrate lyase. The protein is Citrate lyase acyl carrier protein of Streptococcus pyogenes serotype M18 (strain MGAS8232).